Reading from the N-terminus, the 431-residue chain is Trigger factor (431 aa).

One can recognise a PPIase FKBP-type domain in the interval 165–250 (GDTVVIDFDG…IHELKRKELP (86 aa)).

Belongs to the FKBP-type PPIase family. Tig subfamily.

It is found in the cytoplasm. The catalysed reaction is [protein]-peptidylproline (omega=180) = [protein]-peptidylproline (omega=0). Functionally, involved in protein export. Acts as a chaperone by maintaining the newly synthesized protein in an open conformation. Functions as a peptidyl-prolyl cis-trans isomerase. This chain is Trigger factor, found in Leuconostoc citreum (strain KM20).